The following is a 2784-amino-acid chain: Cilia- and flagella-associated protein 46 (2784 aa).

Residues 129-162 (GLEVAAANQPRYQFLVYNASVHHWRVVAPLHRDG) form a TPR 1 repeat. A coiled-coil region spans residues 242-268 (TAAAAKLTELQKDVARLQVHLATLAAA). A TPR 2 repeat occupies 401-434 (SLAPVVVAAHVKALEQLEDVLTTFTKLADVEGIH). Disordered regions lie at residues 543–562 (SAEP…RSKE) and 581–607 (RDLP…AAAR). Residues 585-595 (HPPPPAPTDPP) show a composition bias toward pro residues. Residues 644 to 665 (AVDREMVLLQAQLAHYEAEAAI) adopt a coiled-coil conformation. The interval 670 to 697 (RRRADISPPTRPSPPEVDGEGVRQPPAT) is disordered. Residues 708 to 743 (ASVRSMRGAMSVNEPWLTLNNAVQLYNAALPLMQQH) form a TPR 3 repeat. 2 disordered regions span residues 799–837 (DAGQ…PAYK) and 929–954 (RVNE…KPHG). Residues 802–817 (QELEDDDDEDSLDEDG) show a composition bias toward acidic residues. The TPR 4 repeat unit spans residues 976-1009 (LELWAKMARAVADAGVWPAALECSAAALAALPGA). The span at 1275-1288 (TGDLDGDGTDDEDD) shows a compositional bias: acidic residues. Disordered regions lie at residues 1275-1351 (TGDL…RVPE) and 1640-1673 (AAGG…HGQL). A compositionally biased stretch (gly residues) spans 1298–1311 (SGGGSSSGRAGGGF). The segment covering 1646 to 1658 (GGRESPSPHDDGI) has biased composition (basic and acidic residues). 2 TPR repeats span residues 1712–1745 (HDVW…AADC) and 1854–1886 (MEML…LAAR). Positions 1961–1984 (RLAEVQLAAAEERERLAGADREKA) form a coiled coil. Disordered stretches follow at residues 2068–2112 (RPFV…EAAA), 2278–2303 (ATAE…PAAA), 2346–2389 (AAKG…PGAA), and 2441–2465 (LPLP…AGPT). Over residues 2069-2083 (PFVPPPKPPGAPKRP) the composition is skewed to pro residues. Positions 2087–2096 (AEEEEDEEGP) are enriched in acidic residues. Positions 2097–2112 (DTAAADAAAEAAEAAA) are enriched in low complexity. The segment covering 2378–2389 (SKQGPKSGPGAA) has biased composition (low complexity). Residues 2450–2461 (DGKKEKKDKKEA) are compositionally biased toward basic and acidic residues. The TPR 7 repeat unit spans residues 2613 to 2646 (ATGGPCTGLLFLGVGRFAAHVPPAVLASAPLGGC).

It belongs to the CFAP46 family. As to quaternary structure, part of the PDCP1 complex composed of CFAP46, CFAP54, CFAP74 and CFAP221; the PDCP1 complex binds calmodulin.

The protein resides in the cytoplasm. The protein localises to the cytoskeleton. Its subcellular location is the cilium axoneme. As part of the central apparatus of the cilium axoneme plays a role in cilium movement and thereby cell motility. In Chlamydomonas reinhardtii (Chlamydomonas smithii), this protein is Cilia- and flagella-associated protein 46.